A 432-amino-acid chain; its full sequence is Beta-fructosidase (432 aa).

Residues 14–17 (WMND), Gln-33, Trp-41, 74–75 (FS), Tyr-92, 137–138 (RD), 188–190 (EIE), Thr-208, and Trp-260 contribute to the substrate site. Asp-17 is an active-site residue.

Belongs to the glycosyl hydrolase 32 family.

It catalyses the reaction Hydrolysis of terminal non-reducing beta-D-fructofuranoside residues in beta-D-fructofuranosides.. Its function is as follows. Hydrolysis of sucrose, raffinose, inulin and levan. Specific for the fructose moiety and the beta-anomeric configuration of the glycosidic linkages of its substrates. The enzyme released fructose from sucrose and raffinose, and the fructose polymer inulin is hydrolyzed quantitatively in an exo-type fashion. The chain is Beta-fructosidase (bfrA) from Thermotoga maritima (strain ATCC 43589 / DSM 3109 / JCM 10099 / NBRC 100826 / MSB8).